A 365-amino-acid polypeptide reads, in one-letter code: Flagellar P-ring protein (365 aa).

The signal sequence occupies residues 1–19; it reads MFKALAGIVLALVATLAHA.

The protein belongs to the FlgI family. In terms of assembly, the basal body constitutes a major portion of the flagellar organelle and consists of four rings (L,P,S, and M) mounted on a central rod.

The protein resides in the periplasm. It localises to the bacterial flagellum basal body. Its function is as follows. Assembles around the rod to form the L-ring and probably protects the motor/basal body from shearing forces during rotation. This is Flagellar P-ring protein from Salmonella heidelberg (strain SL476).